Consider the following 293-residue polypeptide: Small ribosomal subunit protein uS3 (293 aa).

The KH type-2 domain maps to 39–110 (IRREIMKFLK…KISIKIKEVK (72 aa)).

Belongs to the universal ribosomal protein uS3 family. Part of the 30S ribosomal subunit. Forms a tight complex with proteins S10 and S14.

Functionally, binds the lower part of the 30S subunit head. Binds mRNA in the 70S ribosome, positioning it for translation. This chain is Small ribosomal subunit protein uS3, found in Borreliella burgdorferi (strain ATCC 35210 / DSM 4680 / CIP 102532 / B31) (Borrelia burgdorferi).